The primary structure comprises 582 residues: Protein bps2 (582 aa).

28-35 (APNAYGKT) contributes to the ATP binding site. A coiled-coil region spans residues 243–281 (RQSYERQLQEINAQLQKITAQRNEAEIEIRLLEKVLDQI). The region spanning 243–351 (RQSYERQLQE…KLKELDQISS (109 aa)) is the Zinc-hook domain. Zn(2+) contacts are provided by Cys292 and Cys295. Positions 320–351 (SLYAGIKKEADELLSKKSEIEKKLKELDQISS) form a coiled coil.

This Acidianus ambivalens (Desulfurolobus ambivalens) protein is Protein bps2 (bps2).